The following is a 208-amino-acid chain: Nitrate/nitrite response regulator protein homolog (208 aa).

The Response regulatory domain occupies 6-122 (KVLLIDDHPL…TLLEQIKRIA (117 aa)). 4-aspartylphosphate is present on Asp-57. Residues 142–207 (EDNPLDSLTD…AATVLFFEQN (66 aa)) enclose the HTH luxR-type domain. The H-T-H motif DNA-binding region spans 166-185 (NKQIAAQLFISEETVKVHIR).

In terms of biological role, could activate the expression of a formate dehydrogenase operon and could repress the transcription of the fumarate reductase (frdABCD) operon. This chain is Nitrate/nitrite response regulator protein homolog (narP), found in Haemophilus influenzae (strain ATCC 51907 / DSM 11121 / KW20 / Rd).